The primary structure comprises 105 residues: Large ribosomal subunit protein uL24 (105 aa).

The protein belongs to the universal ribosomal protein uL24 family. In terms of assembly, part of the 50S ribosomal subunit.

Functionally, one of two assembly initiator proteins, it binds directly to the 5'-end of the 23S rRNA, where it nucleates assembly of the 50S subunit. One of the proteins that surrounds the polypeptide exit tunnel on the outside of the subunit. This chain is Large ribosomal subunit protein uL24, found in Anaplasma marginale (strain St. Maries).